The sequence spans 190 residues: Potassium-transporting ATPase KdpC subunit (190 aa).

A helical transmembrane segment spans residues Thr-10–Gly-30.

This sequence belongs to the KdpC family. In terms of assembly, the system is composed of three essential subunits: KdpA, KdpB and KdpC.

It is found in the cell inner membrane. In terms of biological role, part of the high-affinity ATP-driven potassium transport (or Kdp) system, which catalyzes the hydrolysis of ATP coupled with the electrogenic transport of potassium into the cytoplasm. This subunit acts as a catalytic chaperone that increases the ATP-binding affinity of the ATP-hydrolyzing subunit KdpB by the formation of a transient KdpB/KdpC/ATP ternary complex. The chain is Potassium-transporting ATPase KdpC subunit from Escherichia coli (strain SMS-3-5 / SECEC).